Here is a 680-residue protein sequence, read N- to C-terminus: DNA ligase 1 (680 aa).

Residues 35 to 39 (DAEYD), 84 to 85 (SL), and aspartate 115 each bind NAD(+). Residue lysine 117 is the N6-AMP-lysine intermediate of the active site. NAD(+)-binding residues include arginine 138, glutamate 175, lysine 295, and lysine 319. Zn(2+) is bound by residues cysteine 413, cysteine 416, cysteine 431, and cysteine 436. A BRCT domain is found at 599-680 (REGSQLQGLK…FANLLKGLDR (82 aa)).

The protein belongs to the NAD-dependent DNA ligase family. LigA subfamily. The cofactor is Mg(2+). Requires Mn(2+) as cofactor.

It carries out the reaction NAD(+) + (deoxyribonucleotide)n-3'-hydroxyl + 5'-phospho-(deoxyribonucleotide)m = (deoxyribonucleotide)n+m + AMP + beta-nicotinamide D-nucleotide.. Its function is as follows. DNA ligase that catalyzes the formation of phosphodiester linkages between 5'-phosphoryl and 3'-hydroxyl groups in double-stranded DNA using NAD as a coenzyme and as the energy source for the reaction. It is essential for DNA replication and repair of damaged DNA. The polypeptide is DNA ligase 1 (Nitratidesulfovibrio vulgaris (strain DP4) (Desulfovibrio vulgaris)).